Here is a 130-residue protein sequence, read N- to C-terminus: Glycine cleavage system H protein (130 aa).

The Lipoyl-binding domain maps to T24–K106. Position 65 is an N6-lipoyllysine (K65).

Belongs to the GcvH family. The glycine cleavage system is composed of four proteins: P, T, L and H. (R)-lipoate is required as a cofactor.

The glycine cleavage system catalyzes the degradation of glycine. The H protein shuttles the methylamine group of glycine from the P protein to the T protein. This Saccharophagus degradans (strain 2-40 / ATCC 43961 / DSM 17024) protein is Glycine cleavage system H protein.